The sequence spans 867 residues: Elongation factor 2 (867 aa).

Residues 17–368 enclose the tr-type G domain; it reads HNIRNLSVVA…MIVLHLPSPV (352 aa). 26–33 contacts GTP; it reads AHVDHGKS. 2 positions are modified to phosphothreonine: T57 and T59. Residues 176–179 and 231–233 contribute to the GTP site; these read NKLD and SGL. A Diphthamide modification is found at H723.

Belongs to the TRAFAC class translation factor GTPase superfamily. Classic translation factor GTPase family. EF-G/EF-2 subfamily. In terms of processing, phosphorylation by EF-2 kinase completely inactivates EF-2.

The protein localises to the cytoplasm. The enzyme catalyses GTP + H2O = GDP + phosphate + H(+). Catalyzes the GTP-dependent ribosomal translocation step during translation elongation. During this step, the ribosome changes from the pre-translocational (PRE) to the post-translocational (POST) state as the newly formed A-site-bound peptidyl-tRNA and P-site-bound deacylated tRNA move to the P and E sites, respectively. Catalyzes the coordinated movement of the two tRNA molecules, the mRNA and conformational changes in the ribosome. The protein is Elongation factor 2 of Blastocystis hominis.